A 344-amino-acid polypeptide reads, in one-letter code: UDP-N-acetylenolpyruvoylglucosamine reductase (344 aa).

Residues 19-189 enclose the FAD-binding PCMH-type domain; sequence INVTAKKIIF…IAVGIKIKKN (171 aa). The active site involves arginine 165. The Proton donor role is filled by serine 235. Residue glutamate 331 is part of the active site.

This sequence belongs to the MurB family. FAD is required as a cofactor.

The protein resides in the cytoplasm. The catalysed reaction is UDP-N-acetyl-alpha-D-muramate + NADP(+) = UDP-N-acetyl-3-O-(1-carboxyvinyl)-alpha-D-glucosamine + NADPH + H(+). Its pathway is cell wall biogenesis; peptidoglycan biosynthesis. In terms of biological role, cell wall formation. The protein is UDP-N-acetylenolpyruvoylglucosamine reductase of Buchnera aphidicola subsp. Schizaphis graminum (strain Sg).